Consider the following 143-residue polypeptide: MAPKKKVTGLIKLQIKAGAANPAPPIGPALGQHGVNIMEFCKAYNAQTEAQRGNVIPVEITVYEDRTFTFILKTPPAAELIKKAAGVAKGSGTPHTVKVAKLTMDQVREIAEQKQADLNANDIDAAAKIIAGTARSMGITVEA.

It belongs to the universal ribosomal protein uL11 family. In terms of assembly, part of the ribosomal stalk of the 50S ribosomal subunit. Interacts with L10 and the large rRNA to form the base of the stalk. L10 forms an elongated spine to which L12 dimers bind in a sequential fashion forming a multimeric L10(L12)X complex. In terms of processing, one or more lysine residues are methylated.

Functionally, forms part of the ribosomal stalk which helps the ribosome interact with GTP-bound translation factors. The polypeptide is Large ribosomal subunit protein uL11 (Clavibacter michiganensis subsp. michiganensis (strain NCPPB 382)).